We begin with the raw amino-acid sequence, 264 residues long: MRTRSTISTPNGITWYYEQEGTGPDVVLVPDGLGECQMFDSSVSQIAAQGFRVTTFDMPGMSRSAKAPPETYTEVTAQKLASYVISVLDALDIKHATVWGCSSGASTVVALLLGYPDRIRNAMCHELPTKLLDHLSNTAVLEDEEISKILANVMLNDVSGGSEAWQAMGDEVHARLHKNYPVWARGYPRTIPPSAPVKDLEALRGKPLDWTVGAATPTESFFDNIVTATKAGVNIGLLPGMHFPYVSHPDVFAKYVVETTQKHL.

Residues 27 to 207 form the AB hydrolase-1 domain; it reads VLVPDGLGEC…KDLEALRGKP (181 aa). Residues G32, S102, and S103 each coordinate zearalenone. S102 is a catalytic residue. The active site involves E126. 4 residues coordinate zearalenone: W183, Y187, S220, and H242. The active site involves H242.

The protein belongs to the AB hydrolase superfamily. Hydrolase RutD family. In terms of assembly, homodimer.

It catalyses the reaction zearalenone + H2O = hydrolyzed zearalenone + H(+). Lactonohydrolase that specifically hydrolyzes and deactivates the mycotoxin zearalenone (ZEN) and its zearalenol (ZOL) derivatives. ZHD101 prefers ZEN to ZOL as its substrate, but ZOL, especially the alpha-form, shows higher estrogenic toxicity than ZEN. The chain is Zearalenone hydrolase from Bionectria ochroleuca (Gliocladium roseum).